A 359-amino-acid polypeptide reads, in one-letter code: Phospho-N-acetylmuramoyl-pentapeptide-transferase (359 aa).

Transmembrane regions (helical) follow at residues 3–23 (QILI…PVLI), 55–75 (VAIL…GLAL), 84–104 (GLLV…DDLI), 120–140 (TVGI…FGNA), 156–176 (IATV…LVSA), 187–207 (LDGL…LITF), 231–251 (LALV…WNAA), 255–275 (IFMG…LSVT), 280–300 (ILAV…VVQI), and 334–354 (FWLL…GEWL).

Belongs to the glycosyltransferase 4 family. MraY subfamily. It depends on Mg(2+) as a cofactor.

It is found in the cell membrane. The catalysed reaction is UDP-N-acetyl-alpha-D-muramoyl-L-alanyl-gamma-D-glutamyl-meso-2,6-diaminopimeloyl-D-alanyl-D-alanine + di-trans,octa-cis-undecaprenyl phosphate = di-trans,octa-cis-undecaprenyl diphospho-N-acetyl-alpha-D-muramoyl-L-alanyl-D-glutamyl-meso-2,6-diaminopimeloyl-D-alanyl-D-alanine + UMP. It functions in the pathway cell wall biogenesis; peptidoglycan biosynthesis. Catalyzes the initial step of the lipid cycle reactions in the biosynthesis of the cell wall peptidoglycan: transfers peptidoglycan precursor phospho-MurNAc-pentapeptide from UDP-MurNAc-pentapeptide onto the lipid carrier undecaprenyl phosphate, yielding undecaprenyl-pyrophosphoryl-MurNAc-pentapeptide, known as lipid I. The chain is Phospho-N-acetylmuramoyl-pentapeptide-transferase from Mycobacterium sp. (strain MCS).